The following is a 66-amino-acid chain: MDIKRALILFLLFLVVLSNAFVDYIISNFNHAVTCRKPTYFGIVLQGIFLVILFSIVDYLINENIL.

An N-terminal signal peptide occupies residues 1-20; the sequence is MDIKRALILFLLFLVVLSNA. The Extracellular portion of the chain corresponds to 21–40; sequence FVDYIISNFNHAVTCRKPTY. The chain crosses the membrane as a helical span at residues 41–61; that stretch reads FGIVLQGIFLVILFSIVDYLI. At 62-66 the chain is on the cytoplasmic side; it reads NENIL.

It belongs to the asfivirus B66L family.

The protein localises to the host membrane. The protein is Transmembrane protein B66L of Ornithodoros (relapsing fever ticks).